Here is a 468-residue protein sequence, read N- to C-terminus: Hepatocyte nuclear factor 3-alpha (468 aa).

A DNA-binding region (fork-head) is located at residues 169 to 260; that stretch reads AKPPYSYISL…GNMFENGCYL (92 aa). An essential for DNA binding region spans residues 251-288; sequence GNMFENGCYLRRQKRFKCEKQPGAGGGSGGGGSKGGPE. The interval 269–396 is disordered; the sequence is EKQPGAGGGS…DPHYSFNHPF (128 aa). The span at 273–285 shows a compositional bias: gly residues; that stretch reads GAGGGSGGGGSKG. A phosphoserine mark is found at Ser-303 and Ser-327. Composition is skewed to low complexity over residues 318-328 and 347-365; these read GAPAPGPAASP and SPAS…ALAS.

As to quaternary structure, binds DNA as a monomer. Interacts with FOXA2. Interacts with NKX2-1. Interacts with HDAC7. Interacts with the histone H3-H4 heterodimer. Associates with nucleosomes containing histone H2A. Interacts with AR. Interacts with NR0B2. Restricted mainly to endoderm-derived tissues (lung, liver, stomach, and small intestine). Expressed in the prostate.

It is found in the nucleus. Transcription factor that is involved in embryonic development, establishment of tissue-specific gene expression and regulation of gene expression in differentiated tissues. Is thought to act as a 'pioneer' factor opening the compacted chromatin for other proteins through interactions with nucleosomal core histones and thereby replacing linker histones at target enhancer and/or promoter sites. Binds DNA with the consensus sequence 5'-[AC]A[AT]T[AG]TT[GT][AG][CT]T[CT]-3'. Proposed to play a role in translating the epigenetic signatures into cell type-specific enhancer-driven transcriptional programs. Involved in the development of multiple endoderm-derived organ systems such as the liver, pancreas, lungs and prostate; FOXA1 and FOXA2 seem to have at least in part redundant roles. Plays a role in prostate morphogenesis and epithelial cell differentiation. FOXA1 and FOXA2 are essential for hepatic specification. FOXA1 and FOXA2 are required for morphogenesis and cell differentiation during formation of the lung. FOXA1 and FOXA2 are involved in bile duct formation; they positively regulate the binding of glucocorticoid receptor/NR3C1 to the IL6 promoter. FOXA1 and FOXA2 regulate multiple phases of midbrain dopaminergic neuron development; they regulate expression of NEUROG2 at the beginning of mDA neurogenesis and of NR4A2 and EN1 in immature mDA neurons. Modulates the transcriptional activity of nuclear hormone receptors. Is involved in ESR1-mediated transcription. Inhibits NKX2-1-mediated transcription from the SFTPC promoter in lung epithel independently from DNA-binding. Involved in regulation of apoptosis. Involved in cell cycle regulation. Originally described as a transcription activator for a number of liver genes such as AFP, albumin, tyrosine aminotransferase, PEPCK, etc. Interacts with the cis-acting regulatory regions of these genes. Involved in glucose homeostasis; activates the GCG promoter. The chain is Hepatocyte nuclear factor 3-alpha (Foxa1) from Mus musculus (Mouse).